The primary structure comprises 290 residues: 2-dehydropantoate 2-reductase (290 aa).

NADP(+) contacts are provided by residues Gly8 to Gly13, Asn98, and Ala124. Asn98 lines the substrate pocket. Catalysis depends on Lys175, which acts as the Proton donor. Substrate is bound by residues Asn179 and Ser244. Residue Glu256 participates in NADP(+) binding.

It belongs to the ketopantoate reductase family.

Its subcellular location is the cytoplasm. The enzyme catalyses (R)-pantoate + NADP(+) = 2-dehydropantoate + NADPH + H(+). Its pathway is cofactor biosynthesis; (R)-pantothenate biosynthesis; (R)-pantoate from 3-methyl-2-oxobutanoate: step 2/2. Catalyzes the NADPH-dependent reduction of ketopantoate into pantoic acid. The protein is 2-dehydropantoate 2-reductase of Caulobacter vibrioides (strain ATCC 19089 / CIP 103742 / CB 15) (Caulobacter crescentus).